The chain runs to 326 residues: Glyoxylate/hydroxypyruvate reductase B (326 aa).

Residues Arg237 and Glu266 contribute to the active site. Residue His285 is the Proton donor of the active site.

It belongs to the D-isomer specific 2-hydroxyacid dehydrogenase family. GhrB subfamily. In terms of assembly, homodimer.

Its subcellular location is the cytoplasm. The enzyme catalyses glycolate + NADP(+) = glyoxylate + NADPH + H(+). It catalyses the reaction (R)-glycerate + NAD(+) = 3-hydroxypyruvate + NADH + H(+). It carries out the reaction (R)-glycerate + NADP(+) = 3-hydroxypyruvate + NADPH + H(+). In terms of biological role, catalyzes the NADPH-dependent reduction of glyoxylate and hydroxypyruvate into glycolate and glycerate, respectively. This chain is Glyoxylate/hydroxypyruvate reductase B, found in Yersinia pseudotuberculosis serotype O:3 (strain YPIII).